Consider the following 802-residue polypeptide: Elongation factor G, mitochondrial (802 aa).

The transit peptide at 1 to 24 (MRYPSLARLPRRALSGLARAPVRL) directs the protein to the mitochondrion. In terms of domain architecture, tr-type G spans 100–387 (SRVRNIGIAA…GVIDYLPNPS (288 aa)). GTP contacts are provided by residues 109-116 (AHIDSGKT), 185-189 (DTPGH), and 239-242 (NKMD).

It belongs to the TRAFAC class translation factor GTPase superfamily. Classic translation factor GTPase family. EF-G/EF-2 subfamily.

It localises to the mitochondrion. It functions in the pathway protein biosynthesis; polypeptide chain elongation. In terms of biological role, mitochondrial GTPase that catalyzes the GTP-dependent ribosomal translocation step during translation elongation. During this step, the ribosome changes from the pre-translocational (PRE) to the post-translocational (POST) state as the newly formed A-site-bound peptidyl-tRNA and P-site-bound deacylated tRNA move to the P and E sites, respectively. Catalyzes the coordinated movement of the two tRNA molecules, the mRNA and conformational changes in the ribosome. In Aspergillus terreus (strain NIH 2624 / FGSC A1156), this protein is Elongation factor G, mitochondrial (mef1).